The chain runs to 155 residues: Ribonuclease HI (155 aa).

Positions 1–142 constitute an RNase H type-1 domain; that stretch reads MTKQVEIFTD…CDELARAAAE (142 aa). 4 residues coordinate Mg(2+): Asp-10, Glu-48, Asp-70, and Asp-134.

Belongs to the RNase H family. In terms of assembly, monomer. The cofactor is Mg(2+).

It is found in the cytoplasm. The enzyme catalyses Endonucleolytic cleavage to 5'-phosphomonoester.. Functionally, endonuclease that specifically degrades the RNA of RNA-DNA hybrids. The protein is Ribonuclease HI of Vibrio vulnificus (strain CMCP6).